The primary structure comprises 109 residues: MSRISSLQDPFLNALRKEKVSVSVYLVNGIKLQGQVEAFDQFCIVLRNTVNQMVYKHAISTIVPAKSVRMIYNSFNPYHQNSNDEQDENVDDIHSDDLEIQENEGNIHE.

The Sm domain maps to 9–68 (DPFLNALRKEKVSVSVYLVNGIKLQGQVEAFDQFCIVLRNTVNQMVYKHAISTIVPAKSV). Residues 77-109 (PYHQNSNDEQDENVDDIHSDDLEIQENEGNIHE) are disordered.

Belongs to the Hfq family. In terms of assembly, homohexamer.

Its function is as follows. RNA chaperone that binds small regulatory RNA (sRNAs) and mRNAs to facilitate mRNA translational regulation in response to envelope stress, environmental stress and changes in metabolite concentrations. Also binds with high specificity to tRNAs. The chain is RNA-binding protein Hfq from Francisella tularensis subsp. tularensis (strain FSC 198).